The primary structure comprises 406 residues: DNA repair protein RAD55 (406 aa).

Residue 43-50 (GPPGIGKT) coordinates ATP. Residues 385 to 406 (DSNDNPLPNAEGKEEIIYDSEG) are disordered.

This sequence belongs to the RecA family. RAD55 subfamily.

Its subcellular location is the nucleus. Required for radiation resistance and meiotic viability and presumably acts in recombination and recombinational DNA repair pathways. This Saccharomyces cerevisiae (strain ATCC 204508 / S288c) (Baker's yeast) protein is DNA repair protein RAD55 (RAD55).